We begin with the raw amino-acid sequence, 177 residues long: ATP synthase subunit delta (177 aa).

It belongs to the ATPase delta chain family. In terms of assembly, F-type ATPases have 2 components, F(1) - the catalytic core - and F(0) - the membrane proton channel. F(1) has five subunits: alpha(3), beta(3), gamma(1), delta(1), epsilon(1). F(0) has three main subunits: a(1), b(2) and c(10-14). The alpha and beta chains form an alternating ring which encloses part of the gamma chain. F(1) is attached to F(0) by a central stalk formed by the gamma and epsilon chains, while a peripheral stalk is formed by the delta and b chains.

It localises to the cell inner membrane. Functionally, f(1)F(0) ATP synthase produces ATP from ADP in the presence of a proton or sodium gradient. F-type ATPases consist of two structural domains, F(1) containing the extramembraneous catalytic core and F(0) containing the membrane proton channel, linked together by a central stalk and a peripheral stalk. During catalysis, ATP synthesis in the catalytic domain of F(1) is coupled via a rotary mechanism of the central stalk subunits to proton translocation. This protein is part of the stalk that links CF(0) to CF(1). It either transmits conformational changes from CF(0) to CF(1) or is implicated in proton conduction. The polypeptide is ATP synthase subunit delta (Aeromonas hydrophila subsp. hydrophila (strain ATCC 7966 / DSM 30187 / BCRC 13018 / CCUG 14551 / JCM 1027 / KCTC 2358 / NCIMB 9240 / NCTC 8049)).